A 347-amino-acid chain; its full sequence is tRNA N6-adenosine threonylcarbamoyltransferase (347 aa).

Residues histidine 117 and histidine 121 each contribute to the Fe cation site. Residues 140–144, aspartate 174, glycine 187, aspartate 191, and asparagine 281 each bind substrate; that span reads LVSGG. Residue aspartate 309 coordinates Fe cation.

Belongs to the KAE1 / TsaD family. It depends on Fe(2+) as a cofactor.

The protein localises to the cytoplasm. It carries out the reaction L-threonylcarbamoyladenylate + adenosine(37) in tRNA = N(6)-L-threonylcarbamoyladenosine(37) in tRNA + AMP + H(+). In terms of biological role, required for the formation of a threonylcarbamoyl group on adenosine at position 37 (t(6)A37) in tRNAs that read codons beginning with adenine. Is involved in the transfer of the threonylcarbamoyl moiety of threonylcarbamoyl-AMP (TC-AMP) to the N6 group of A37, together with TsaE and TsaB. TsaD likely plays a direct catalytic role in this reaction. The chain is tRNA N6-adenosine threonylcarbamoyltransferase from Thermobifida fusca (strain YX).